The primary structure comprises 321 residues: Olfactory receptor 5P60 (321 aa).

Residues 1–28 (MAFLHNGNHTAVTEFILLGLTDDPVLRI) lie on the Extracellular side of the membrane. Asn8 carries N-linked (GlcNAc...) asparagine glycosylation. A helical membrane pass occupies residues 29 to 49 (VLFTIILCIYLVTVSGNLSTI). The Cytoplasmic portion of the chain corresponds to 50 to 57 (LLIRVSSQ). A helical membrane pass occupies residues 58–78 (LHHPMYFFLSHLASADIGYSS). At 79–102 (SVTPNMLVNFLVKQNTISYIGCSI) the chain is on the extracellular side. Cysteines 100 and 192 form a disulfide. The helical transmembrane segment at 103–123 (QFGSAAFFGGLECFLLAVMAY) threads the bilayer. Residues 124 to 136 (DRFVAICNPLLYS) lie on the Cytoplasmic side of the membrane. A helical transmembrane segment spans residues 137-157 (TKMSTQVCVQLVVGSYIGGFL). Residues 158-199 (NASFATVSFLFLFFCGPNIINHFFCDFAPLIELSCSDVRISV) lie on the Extracellular side of the membrane. The chain crosses the membrane as a helical span at residues 200-220 (LVTSFSAGTVTMLTVLVIAIS). Residues 221 to 240 (YTYILITILKMRSTEGRHKA) are Cytoplasmic-facing. The helical transmembrane segment at 241–261 (FSTCTSHLTAVSLFYGTITFI) threads the bilayer. The Extracellular segment spans residues 262-274 (YVMPKSRYSTDQN). The chain crosses the membrane as a helical span at residues 275 to 295 (KVVSVFYMVVIPMLNPLIYSL). Over 296-321 (RNNEIKGALRRHLGKKIFSQSNILFY) the chain is Cytoplasmic.

Belongs to the G-protein coupled receptor 1 family.

It is found in the cell membrane. In terms of biological role, potential odorant receptor. The chain is Olfactory receptor 5P60 from Mus musculus (Mouse).